The sequence spans 383 residues: tRNA(Met) cytidine acetate ligase (383 aa).

ATP-binding positions include 7–20, Gly-101, Asn-153, and 178–179; these read IAEF…HEFL and RI.

It belongs to the TmcAL family.

It is found in the cytoplasm. It carries out the reaction cytidine(34) in elongator tRNA(Met) + acetate + ATP = N(4)-acetylcytidine(34) in elongator tRNA(Met) + AMP + diphosphate. Its function is as follows. Catalyzes the formation of N(4)-acetylcytidine (ac(4)C) at the wobble position of elongator tRNA(Met), using acetate and ATP as substrates. First activates an acetate ion to form acetyladenylate (Ac-AMP) and then transfers the acetyl group to tRNA to form ac(4)C34. This is tRNA(Met) cytidine acetate ligase from Lactobacillus helveticus (strain DPC 4571).